The following is a 717-amino-acid chain: UvrABC system protein C (717 aa).

Residues 16–95 (DAPGVYRFHD…IKEYDPRFNV (80 aa)) enclose the GIY-YIG domain. Residues 208 to 243 (DTLIRKLDREMRQASEELEFERAARLRDDLEALRRA) enclose the UVR domain. Disordered stretches follow at residues 517–555 (TAAG…GRPR) and 696–717 (HAAL…GESQ). 2 stretches are compositionally biased toward basic and acidic residues: residues 541–553 (EAER…ETGR) and 707–717 (ESRDNAEGESQ).

This sequence belongs to the UvrC family. In terms of assembly, interacts with UvrB in an incision complex.

The protein localises to the cytoplasm. The UvrABC repair system catalyzes the recognition and processing of DNA lesions. UvrC both incises the 5' and 3' sides of the lesion. The N-terminal half is responsible for the 3' incision and the C-terminal half is responsible for the 5' incision. The sequence is that of UvrABC system protein C from Saccharopolyspora erythraea (strain ATCC 11635 / DSM 40517 / JCM 4748 / NBRC 13426 / NCIMB 8594 / NRRL 2338).